An 83-amino-acid polypeptide reads, in one-letter code: MENDAGENVDLYVPRKCSASNRIIHAKDHASVQLSIVDVDPETGRQTDGSKTYAICGEIRRMGESDDCIVRLAKKDGLITKNF.

Belongs to the eukaryotic ribosomal protein eS21 family. Component of the 40S small ribosomal subunit. Interacts with sta.

The protein localises to the cytoplasm. It is found in the cytosol. The protein resides in the rough endoplasmic reticulum. In terms of biological role, may be an associated component of the ribosome rather than a core structural subunit. May act as a translation initiation factor. Has a role in regulation of cell proliferation in the hematopoietic organs and the imaginal disks of larva. The protein is Small ribosomal subunit protein eS21 (RpS21) of Drosophila ananassae (Fruit fly).